The primary structure comprises 122 residues: Large ribosomal subunit protein bL12 (122 aa).

This sequence belongs to the bacterial ribosomal protein bL12 family. Homodimer. Part of the ribosomal stalk of the 50S ribosomal subunit. Forms a multimeric L10(L12)X complex, where L10 forms an elongated spine to which 2 to 4 L12 dimers bind in a sequential fashion. Binds GTP-bound translation factors.

Its function is as follows. Forms part of the ribosomal stalk which helps the ribosome interact with GTP-bound translation factors. Is thus essential for accurate translation. This chain is Large ribosomal subunit protein bL12, found in Latilactobacillus sakei subsp. sakei (strain 23K) (Lactobacillus sakei subsp. sakei).